Reading from the N-terminus, the 224-residue chain is 2-C-methyl-D-erythritol 4-phosphate cytidylyltransferase (224 aa).

It belongs to the IspD/TarI cytidylyltransferase family. IspD subfamily.

It catalyses the reaction 2-C-methyl-D-erythritol 4-phosphate + CTP + H(+) = 4-CDP-2-C-methyl-D-erythritol + diphosphate. It participates in isoprenoid biosynthesis; isopentenyl diphosphate biosynthesis via DXP pathway; isopentenyl diphosphate from 1-deoxy-D-xylulose 5-phosphate: step 2/6. Functionally, catalyzes the formation of 4-diphosphocytidyl-2-C-methyl-D-erythritol from CTP and 2-C-methyl-D-erythritol 4-phosphate (MEP). In Caldicellulosiruptor saccharolyticus (strain ATCC 43494 / DSM 8903 / Tp8T 6331), this protein is 2-C-methyl-D-erythritol 4-phosphate cytidylyltransferase.